The sequence spans 740 residues: N-acetylated-alpha-linked acidic dipeptidase 2 (740 aa).

The Cytoplasmic segment spans residues 1–7 (MARPRHL). Residues 8–31 (RGLGMCITAVLASFIAGFTVGWFI) traverse the membrane as a helical; Signal-anchor for type II membrane protein segment. Residues 32–740 (KPLKETTTSA…AAAGTLTNVL (709 aa)) lie on the Extracellular side of the membrane. Asn-111, Asn-143, and Asn-185 each carry an N-linked (GlcNAc...) asparagine glycan. Substrate is bound by residues Arg-200 and Asn-247. Ca(2+)-binding residues include Thr-259 and Tyr-262. Residues 264–577 (AKEYTFRLPV…QLRGALVYEL (314 aa)) are NAALADase. N-linked (GlcNAc...) asparagine glycosylation occurs at Asn-314. 2 residues coordinate Zn(2+): His-367 and Asp-377. Glu-414 is a binding site for substrate. Glu-414 functions as the Nucleophile; for NAALADase activity in the catalytic mechanism. Glu-415 is a binding site for Zn(2+). Positions 423 and 426 each coordinate Ca(2+). Residue Asp-443 coordinates Zn(2+). N-linked (GlcNAc...) asparagine glycosylation occurs at Asn-449. Residues 507-508 (SG), 524-526 (RAR), Tyr-542, and 542-543 (YH) contribute to the substrate site. Position 543 (His-543) interacts with Zn(2+). N-linked (GlcNAc...) asparagine glycosylation is present at Asn-603. Ser-618 acts as the Charge relay system in catalysis. Asn-628 carries an N-linked (GlcNAc...) asparagine glycan. Catalysis depends on charge relay system residues Asp-656 and His-679. Residue 689–690 (KY) participates in substrate binding.

Belongs to the peptidase M28 family. M28B subfamily. As to quaternary structure, homodimer. Zn(2+) is required as a cofactor. In terms of tissue distribution, expressed ovary, testes and lung, but not brain.

It localises to the cell membrane. It carries out the reaction Release of an unsubstituted, C-terminal glutamyl residue, typically from Ac-Asp-Glu or folylpoly-gamma-glutamates.. Functionally, has N-acetylated-alpha-linked-acidic dipeptidase (NAALADase) activity. Also exhibits a dipeptidyl-peptidase IV type activity. Inactivates the peptide neurotransmitter N-acetylaspartylglutamate. The protein is N-acetylated-alpha-linked acidic dipeptidase 2 (Naalad2) of Mus musculus (Mouse).